Here is a 1003-residue protein sequence, read N- to C-terminus: Cytosolic carboxypeptidase 3 (1003 aa).

The interval 1-23 is disordered; the sequence is MSEDSEKEDYSDRTISDEDESDE. Residues 299-570 enclose the Peptidase M14 domain; that stretch reads YPYTYTNLQE…HFCDSLLDYC (272 aa). Residues histidine 364, glutamate 367, and histidine 460 each contribute to the Zn(2+) site. Glutamate 534 (proton donor/acceptor) is an active-site residue. Disordered stretches follow at residues 642-662 and 911-1003; these read KQLK…NIRE and KSSE…QRDT. Basic and acidic residues predominate over residues 649–662; sequence ERNSTIERHQNIRE. The segment covering 922 to 934 has biased composition (basic residues); it reads PKKRRKYSRVKAT. The span at 963–976 shows a compositional bias: polar residues; it reads AEGSSQQGTMQTAP.

This sequence belongs to the peptidase M14 family. Zn(2+) is required as a cofactor.

The protein resides in the cytoplasm. The protein localises to the cytosol. It catalyses the reaction (L-glutamyl)(n+1)-gamma-L-glutamyl-L-glutamyl-[protein] + H2O = (L-glutamyl)(n)-gamma-L-glutamyl-L-glutamyl-[protein] + L-glutamate. Functionally, metallocarboxypeptidase that mediates deglutamylation of tubulin and non-tubulin target proteins. Catalyzes the removal of polyglutamate side chains present on the gamma-carboxyl group of glutamate residues within the C-terminal tail of tubulin protein. Specifically cleaves tubulin long-side-chains, while it is not able to remove the branching point glutamate. Also catalyzes the removal of polyglutamate residues from the carboxy-terminus of non-tubulin proteins such as MYLK. May catalyze the hydrolysis of aspartate from the carboxy-terminus of target proteins. Does not show detyrosinase or deglycylase activities from the carboxy-terminus of target proteins. In Bos taurus (Bovine), this protein is Cytosolic carboxypeptidase 3 (AGBL3).